The chain runs to 403 residues: 4-hydroxy-3-methylbut-2-en-1-yl diphosphate synthase (ferredoxin) (403 aa).

[4Fe-4S] cluster-binding residues include Cys-312, Cys-315, Cys-346, and Glu-353.

Belongs to the IspG family. [4Fe-4S] cluster serves as cofactor.

It catalyses the reaction (2E)-4-hydroxy-3-methylbut-2-enyl diphosphate + 2 oxidized [2Fe-2S]-[ferredoxin] + H2O = 2-C-methyl-D-erythritol 2,4-cyclic diphosphate + 2 reduced [2Fe-2S]-[ferredoxin] + H(+). The protein operates within isoprenoid biosynthesis; isopentenyl diphosphate biosynthesis via DXP pathway; isopentenyl diphosphate from 1-deoxy-D-xylulose 5-phosphate: step 5/6. Its function is as follows. Converts 2C-methyl-D-erythritol 2,4-cyclodiphosphate (ME-2,4cPP) into 1-hydroxy-2-methyl-2-(E)-butenyl 4-diphosphate. The sequence is that of 4-hydroxy-3-methylbut-2-en-1-yl diphosphate synthase (ferredoxin) from Synechocystis sp. (strain ATCC 27184 / PCC 6803 / Kazusa).